A 221-amino-acid chain; its full sequence is Iron-sulfur cluster repair protein YtfE (221 aa).

The protein belongs to the RIC family. YtfE subfamily. In terms of assembly, homodimer.

It localises to the cytoplasm. Di-iron-containing protein involved in the repair of iron-sulfur clusters damaged by oxidative and nitrosative stress conditions. This Yersinia pseudotuberculosis serotype O:1b (strain IP 31758) protein is Iron-sulfur cluster repair protein YtfE.